Consider the following 654-residue polypeptide: Acetyl-coenzyme A synthetase (654 aa).

Residues 191-194 and Thr315 contribute to the CoA site; that span reads RRGQ. Residues 391 to 393, 415 to 420, Asp506, and Arg521 contribute to the ATP site; these read GEP and DTWWQT. Ser529 lines the CoA pocket. Residue Arg532 participates in ATP binding. 3 residues coordinate Mg(2+): Val543, His545, and Val548. N6-acetyllysine is present on Lys615.

It belongs to the ATP-dependent AMP-binding enzyme family. Requires Mg(2+) as cofactor. In terms of processing, acetylated. Deacetylation by the SIR2-homolog deacetylase activates the enzyme.

The catalysed reaction is acetate + ATP + CoA = acetyl-CoA + AMP + diphosphate. Its function is as follows. Catalyzes the conversion of acetate into acetyl-CoA (AcCoA), an essential intermediate at the junction of anabolic and catabolic pathways. AcsA undergoes a two-step reaction. In the first half reaction, AcsA combines acetate with ATP to form acetyl-adenylate (AcAMP) intermediate. In the second half reaction, it can then transfer the acetyl group from AcAMP to the sulfhydryl group of CoA, forming the product AcCoA. The chain is Acetyl-coenzyme A synthetase from Gemmatimonas aurantiaca (strain DSM 14586 / JCM 11422 / NBRC 100505 / T-27).